Consider the following 326-residue polypeptide: Protein BCCIP homolog (326 aa).

The interval 37-81 is disordered; it reads SHPEDCQCSDEDISFDEKQKIPNLPRKGKEEQVSDSSDEEDSQED. A Phosphoserine modification is found at serine 45. Residues 72–81 are compositionally biased toward acidic residues; the sequence is SSDEEDSQED.

The protein belongs to the BCP1 family.

This Arabidopsis thaliana (Mouse-ear cress) protein is Protein BCCIP homolog.